We begin with the raw amino-acid sequence, 83 residues long: Cell division topological specificity factor (83 aa).

This sequence belongs to the MinE family.

Prevents the cell division inhibition by proteins MinC and MinD at internal division sites while permitting inhibition at polar sites. This ensures cell division at the proper site by restricting the formation of a division septum at the midpoint of the long axis of the cell. The polypeptide is Cell division topological specificity factor (Bordetella parapertussis (strain 12822 / ATCC BAA-587 / NCTC 13253)).